The sequence spans 174 residues: Protein C2-DOMAIN ABA-RELATED 6 (174 aa).

The C2 domain maps to 1–115; sequence MEKTEEEVEM…HKLGLKELPH (115 aa). Ca(2+) is bound by residues arginine 30, aspartate 31, aspartate 36, aspartate 82, lysine 83, aspartate 84, and aspartate 90.

Belongs to the plant CAR protein family. As to quaternary structure, binds to PYR/PYL/RCAR abscisic acid intracellular receptors in an ABA-independent manner, both at the plasma membrane and in the nucleus. Subunit of a complex made of CAR6, PHOT1 and RPT3/NPH3. Interacts directly with RPT3/NPH3.

The protein localises to the cell membrane. It localises to the nucleus. Its function is as follows. Stimulates the GTPase/ATPase activities of Obg-like ATPases. Mediates the transient calcium-dependent interaction of PYR/PYL/RCAR abscisic acid (ABA) receptors with the plasma membrane and thus regulates ABA sensitivity. Prevents hypocotyl bending as well as gravitropic response under blue light conditions. The protein is Protein C2-DOMAIN ABA-RELATED 6 of Arabidopsis thaliana (Mouse-ear cress).